Here is a 266-residue protein sequence, read N- to C-terminus: Ribonuclease HII (266 aa).

An RNase H type-2 domain is found at 73-266 (SPVAGVDEAG…NCGSRQKCEG (194 aa)). Residues Asp79, Glu80, and Asp173 each coordinate a divalent metal cation.

This sequence belongs to the RNase HII family. It depends on Mn(2+) as a cofactor. Mg(2+) is required as a cofactor.

The protein resides in the cytoplasm. The catalysed reaction is Endonucleolytic cleavage to 5'-phosphomonoester.. Its function is as follows. Endonuclease that specifically degrades the RNA of RNA-DNA hybrids. This chain is Ribonuclease HII, found in Pelotomaculum thermopropionicum (strain DSM 13744 / JCM 10971 / SI).